The primary structure comprises 783 residues: Probable alpha,alpha-trehalose-phosphate synthase [UDP-forming] 3 (783 aa).

Residues 11–456 (QTLLVVANRL…GFDFLSELND (446 aa)) form a glycosyltransferase region.

It in the N-terminal section; belongs to the glycosyltransferase 20 family. The protein in the C-terminal section; belongs to the trehalose phosphatase family.

It carries out the reaction D-glucose 6-phosphate + UDP-alpha-D-glucose = alpha,alpha-trehalose 6-phosphate + UDP + H(+). The polypeptide is Probable alpha,alpha-trehalose-phosphate synthase [UDP-forming] 3 (TPS3) (Arabidopsis thaliana (Mouse-ear cress)).